Here is a 416-residue protein sequence, read N- to C-terminus: Adenylosuccinate synthetase (416 aa).

Residues 13-19 (GDEGKGK) and 41-43 (GHT) contribute to the GTP site. The active-site Proton acceptor is the Asp14. Positions 14 and 41 each coordinate Mg(2+). IMP contacts are provided by residues 14-17 (DEGK), 39-42 (NAGH), Thr126, Arg140, Gln220, Thr235, and Arg299. His42 acts as the Proton donor in catalysis. 295–301 (VSTGRKR) lines the substrate pocket. GTP contacts are provided by residues Arg301, 327–329 (KLD), and 405–407 (STS).

Belongs to the adenylosuccinate synthetase family. In terms of assembly, homodimer. Mg(2+) serves as cofactor.

The protein localises to the cytoplasm. The enzyme catalyses IMP + L-aspartate + GTP = N(6)-(1,2-dicarboxyethyl)-AMP + GDP + phosphate + 2 H(+). Its pathway is purine metabolism; AMP biosynthesis via de novo pathway; AMP from IMP: step 1/2. In terms of biological role, plays an important role in the de novo pathway of purine nucleotide biosynthesis. Catalyzes the first committed step in the biosynthesis of AMP from IMP. This chain is Adenylosuccinate synthetase, found in Campylobacter lari (strain RM2100 / D67 / ATCC BAA-1060).